Here is a 271-residue protein sequence, read N- to C-terminus: Tryptophan synthase alpha chain (271 aa).

Catalysis depends on proton acceptor residues Glu49 and Asp60.

Belongs to the TrpA family. In terms of assembly, tetramer of two alpha and two beta chains.

The enzyme catalyses (1S,2R)-1-C-(indol-3-yl)glycerol 3-phosphate + L-serine = D-glyceraldehyde 3-phosphate + L-tryptophan + H2O. Its pathway is amino-acid biosynthesis; L-tryptophan biosynthesis; L-tryptophan from chorismate: step 5/5. Functionally, the alpha subunit is responsible for the aldol cleavage of indoleglycerol phosphate to indole and glyceraldehyde 3-phosphate. The sequence is that of Tryptophan synthase alpha chain from Yersinia pestis bv. Antiqua (strain Angola).